A 350-amino-acid chain; its full sequence is MKLVDEAEIEVFAGNGGNGCIGFRREKFIPLGGPDGGDGGAGGSVYIRADENLNTLVDFRHDRIFKAQRGENGMGRQAYGKGGEDLTITVPVGTVVINVATDEVIGDLTQHGDRLLVAKGGRGGLGNMHFKSSTNRSPRQALPGEPGEERTLKLELKLLADVGLLGFPNAGKSTLIRAVSAATPKVADYPFTTLYPNLGVVKVENYRSFVIADIPGLIEGAADGAGLGAQFLRHLQRTRLLLHLVDISPMEGGVEGISPVEQVRAIERELEKHDPELLRKPRWLVLNKADLMFEDEAKAAAEQIVAELGWKEPWFLVSALGREGTFPIMSRIMAFFDRQKEEEQEARNAQ.

The Obg domain occupies 1 to 159 (MKLVDEAEIE…RTLKLELKLL (159 aa)). The interval 126–147 (GNMHFKSSTNRSPRQALPGEPG) is disordered. The OBG-type G domain maps to 160-337 (ADVGLLGFPN…IMSRIMAFFD (178 aa)). Residues 166–173 (GFPNAGKS), 191–195 (FTTLY), 213–216 (DIPG), 287–290 (NKAD), and 318–320 (SAL) each bind GTP. 2 residues coordinate Mg(2+): Ser-173 and Thr-193.

The protein belongs to the TRAFAC class OBG-HflX-like GTPase superfamily. OBG GTPase family. Monomer. The cofactor is Mg(2+).

It localises to the cytoplasm. Its function is as follows. An essential GTPase which binds GTP, GDP and possibly (p)ppGpp with moderate affinity, with high nucleotide exchange rates and a fairly low GTP hydrolysis rate. Plays a role in control of the cell cycle, stress response, ribosome biogenesis and in those bacteria that undergo differentiation, in morphogenesis control. In Stenotrophomonas maltophilia (strain K279a), this protein is GTPase Obg.